The following is a 446-amino-acid chain: Bifunctional protein GlmU (446 aa).

The tract at residues 1–228 (MTKTAAVILA…AEELLGVNSR (228 aa)) is pyrophosphorylase. Residues 9-12 (LAAG), Lys23, Gln72, 77-78 (GT), 100-102 (YGD), Gly140, Glu154, Asn169, and Asn226 each bind UDP-N-acetyl-alpha-D-glucosamine. Asp102 is a Mg(2+) binding site. Asn226 contacts Mg(2+). Positions 229–249 (SELAAAEAVIQGRLREKAMEG) are linker. Positions 250–446 (GATLTAPETV…AHMRRLTGKN (197 aa)) are N-acetyltransferase. UDP-N-acetyl-alpha-D-glucosamine contacts are provided by Arg315 and Lys333. His345 (proton acceptor) is an active-site residue. Residues Tyr348 and Asn359 each contribute to the UDP-N-acetyl-alpha-D-glucosamine site. Acetyl-CoA is bound by residues Ala362, 368–369 (NY), Ser387, Ala405, and Arg422.

The protein in the N-terminal section; belongs to the N-acetylglucosamine-1-phosphate uridyltransferase family. This sequence in the C-terminal section; belongs to the transferase hexapeptide repeat family. Homotrimer. It depends on Mg(2+) as a cofactor.

Its subcellular location is the cytoplasm. The catalysed reaction is alpha-D-glucosamine 1-phosphate + acetyl-CoA = N-acetyl-alpha-D-glucosamine 1-phosphate + CoA + H(+). The enzyme catalyses N-acetyl-alpha-D-glucosamine 1-phosphate + UTP + H(+) = UDP-N-acetyl-alpha-D-glucosamine + diphosphate. It participates in nucleotide-sugar biosynthesis; UDP-N-acetyl-alpha-D-glucosamine biosynthesis; N-acetyl-alpha-D-glucosamine 1-phosphate from alpha-D-glucosamine 6-phosphate (route II): step 2/2. The protein operates within nucleotide-sugar biosynthesis; UDP-N-acetyl-alpha-D-glucosamine biosynthesis; UDP-N-acetyl-alpha-D-glucosamine from N-acetyl-alpha-D-glucosamine 1-phosphate: step 1/1. It functions in the pathway bacterial outer membrane biogenesis; LPS lipid A biosynthesis. Catalyzes the last two sequential reactions in the de novo biosynthetic pathway for UDP-N-acetylglucosamine (UDP-GlcNAc). The C-terminal domain catalyzes the transfer of acetyl group from acetyl coenzyme A to glucosamine-1-phosphate (GlcN-1-P) to produce N-acetylglucosamine-1-phosphate (GlcNAc-1-P), which is converted into UDP-GlcNAc by the transfer of uridine 5-monophosphate (from uridine 5-triphosphate), a reaction catalyzed by the N-terminal domain. This Rhodospirillum rubrum (strain ATCC 11170 / ATH 1.1.1 / DSM 467 / LMG 4362 / NCIMB 8255 / S1) protein is Bifunctional protein GlmU.